The primary structure comprises 151 residues: Putative superoxide dismutase [Cu-Zn] (151 aa).

3 residues coordinate Cu cation: H43, H45, and H60. A disulfide bond links C54 and C144. Residues H60, H68, H77, and D80 each coordinate Zn(2+). A Cu cation-binding site is contributed by H118.

The protein belongs to the Cu-Zn superoxide dismutase family. The cofactor is Cu cation. Zn(2+) is required as a cofactor.

It catalyses the reaction 2 superoxide + 2 H(+) = H2O2 + O2. Functionally, nonessential for normal virus replication. Could be either non-functional or with a low activity. The sequence is that of Putative superoxide dismutase [Cu-Zn] (SOD) from Lepidoptera (butterflies and moths).